Reading from the N-terminus, the 1031-residue chain is Kinesin heavy chain (1031 aa).

The 318-residue stretch at 8–325 (NIKVVCRVRP…LMFGQRAKTI (318 aa)) folds into the Kinesin motor domain. 84–91 (GQTSSGKT) provides a ligand contact to ATP. A coiled-coil region spans residues 393–857 (PKQMTVHVSE…RDNADLRCEL (465 aa)). Residues 673–686 (TDQEDKKREEEDKM) show a composition bias toward basic and acidic residues. Disordered regions lie at residues 673–692 (TDQE…ATEM) and 906–1031 (RNFA…EQGS). Positions 858 to 1031 (PKLERRLRAT…PLTTSGEQGS (174 aa)) are globular. The segment covering 932-949 (GSTGIRGGGYSGIRGGGS) has biased composition (gly residues). Polar residues-rich tracts occupy residues 964 to 977 (SHNN…NPND) and 1014 to 1031 (RNNT…EQGS).

The protein belongs to the TRAFAC class myosin-kinesin ATPase superfamily. Kinesin family. Kinesin subfamily. In terms of assembly, oligomer composed of two heavy chains and two light chains.

It is found in the cytoplasm. It localises to the cytoskeleton. Kinesin is a microtubule-associated force-producing protein that may play a role in organelle transport. The polypeptide is Kinesin heavy chain (Strongylocentrotus purpuratus (Purple sea urchin)).